The chain runs to 347 residues: Intracellular hyaluronan-binding protein 4 (347 aa).

2 disordered regions span residues 39–221 (GTEK…PSET) and 298–347 (FGSL…PALA). 4 stretches are compositionally biased toward basic and acidic residues: residues 61–71 (VKKESQRDRKT), 83–107 (PGHE…DAEK), 116–125 (RPVDVLDRPA), and 146–174 (DGFD…EKRS). Positions 199–213 (EVTENEETQEAVETD) are enriched in acidic residues. Gly residues predominate over residues 307–319 (GGRGGRGGRGRGG). Residues 338–347 (DDPEDFPALA) are compositionally biased toward acidic residues.

Belongs to the SERBP1-HABP4 family. In terms of assembly, associates with ribosomes; promoting ribosome stabilization. Interacts with eef2/eEF2; promoting ribosome stabilization.

It localises to the nucleus. The protein localises to the cytoplasm. It is found in the stress granule. Its subcellular location is the nucleolus. The protein resides in the nucleus speckle. It localises to the cajal body. Its function is as follows. Ribosome-binding protein that promotes ribosome hibernation, a process during which ribosomes are stabilized in an inactive state and preserved from proteasomal degradation. Acts via its association with eef2/eEF2 factor at the A-site of the ribosome, promoting ribosome stabilization in an inactive state compatible with storage. Plays a key role in ribosome hibernation in the mature egg by promoting ribosome stabilization. Ribosomes, which are produced in large quantities during oogenesis, are stored and translationally repressed in the egg and early embryo. The sequence is that of Intracellular hyaluronan-binding protein 4 from Danio rerio (Zebrafish).